Reading from the N-terminus, the 187-residue chain is Elongation factor P (187 aa).

The protein belongs to the elongation factor P family.

Its subcellular location is the cytoplasm. It participates in protein biosynthesis; polypeptide chain elongation. Its function is as follows. Involved in peptide bond synthesis. Stimulates efficient translation and peptide-bond synthesis on native or reconstituted 70S ribosomes in vitro. Probably functions indirectly by altering the affinity of the ribosome for aminoacyl-tRNA, thus increasing their reactivity as acceptors for peptidyl transferase. The sequence is that of Elongation factor P from Sphingopyxis alaskensis (strain DSM 13593 / LMG 18877 / RB2256) (Sphingomonas alaskensis).